The chain runs to 340 residues: Uroporphyrinogen decarboxylase (340 aa).

Residues 21–25 (RQAGR), D71, Y148, S203, and H316 each bind substrate.

It belongs to the uroporphyrinogen decarboxylase family. As to quaternary structure, homodimer.

The protein localises to the cytoplasm. It carries out the reaction uroporphyrinogen III + 4 H(+) = coproporphyrinogen III + 4 CO2. It functions in the pathway porphyrin-containing compound metabolism; protoporphyrin-IX biosynthesis; coproporphyrinogen-III from 5-aminolevulinate: step 4/4. Its function is as follows. Catalyzes the decarboxylation of four acetate groups of uroporphyrinogen-III to yield coproporphyrinogen-III. This Campylobacter hominis (strain ATCC BAA-381 / DSM 21671 / CCUG 45161 / LMG 19568 / NCTC 13146 / CH001A) protein is Uroporphyrinogen decarboxylase.